Reading from the N-terminus, the 333-residue chain is Replication factor C subunit 2 (333 aa).

At alanine 2 the chain carries N-acetylalanine. Glycine 55–threonine 62 is a binding site for ATP.

This sequence belongs to the activator 1 small subunits family. As to quaternary structure, heterotetramer of subunits RFC2, RFC3, RFC4 and RFC5 that can form a complex with RFC1.

It is found in the nucleus. Its function is as follows. May be involved in DNA replication and thus regulate cell proliferation. The protein is Replication factor C subunit 2 (RFC2) of Arabidopsis thaliana (Mouse-ear cress).